Reading from the N-terminus, the 249-residue chain is Isoprenyl transferase (249 aa).

D25 is an active-site residue. Mg(2+) is bound at residue D25. Substrate contacts are provided by residues 26–29 (GNGR), W30, R38, H42, and 70–72 (STE). The Proton acceptor role is filled by N73. Substrate-binding positions include W74, R76, R197, and 203–205 (RLS). E216 contributes to the Mg(2+) binding site.

This sequence belongs to the UPP synthase family. As to quaternary structure, homodimer. The cofactor is Mg(2+).

Functionally, catalyzes the condensation of isopentenyl diphosphate (IPP) with allylic pyrophosphates generating different type of terpenoids. This is Isoprenyl transferase from Streptococcus pyogenes serotype M3 (strain ATCC BAA-595 / MGAS315).